Here is a 141-residue protein sequence, read N- to C-terminus: Endoribonuclease YbeY (141 aa).

H107, H111, and D117 together coordinate Zn(2+).

It belongs to the endoribonuclease YbeY family. Requires Zn(2+) as cofactor.

It is found in the cytoplasm. Its function is as follows. Single strand-specific metallo-endoribonuclease involved in late-stage 70S ribosome quality control and in maturation of the 3' terminus of the 16S rRNA. The protein is Endoribonuclease YbeY of Endomicrobium trichonymphae.